The chain runs to 290 residues: Pirin (290 aa).

Fe cation-binding residues include His56, His58, His101, and Glu103.

It belongs to the pirin family. As to quaternary structure, may interact with NF1/CTF1. Interacts with BCL3. Identified in a complex comprised of PIR, BLC3, NFKB1 and target DNA. Fe cation is required as a cofactor. In terms of tissue distribution, highly expressed in a subset of melanomas. Detected at very low levels in most tissues (at protein level). Expressed in all tissues, with highest level of expression in heart and liver.

The protein resides in the nucleus. It localises to the cytoplasm. It catalyses the reaction quercetin + O2 = 2-(3,4-dihydroxybenzoyloxy)-4,6-dihydroxybenzoate + CO. Its pathway is flavonoid metabolism; quercetin degradation. Inhibited by kojic acid, sodium diethyldithiocarbamate and 1,10-phenanthroline monohydrochloride. Functionally, transcriptional coregulator of NF-kappa-B which facilitates binding of NF-kappa-B proteins to target kappa-B genes in a redox-state-dependent manner. May be required for efficient terminal myeloid maturation of hematopoietic cells. Has quercetin 2,3-dioxygenase activity (in vitro). The polypeptide is Pirin (PIR) (Homo sapiens (Human)).